Consider the following 196-residue polypeptide: MKESIAKVYRKTGETEIKSEINLYGEGKYDIKTGIGFFDHMLNLMARHGLIDVKLEAKGDLQVDSHHTVEDVGIVLGESFKKALGDKKGIKRYGTSFVPMDEALASLSIDISGRPYIVCDFNFTVDKLGEMDTELVEEFLRALAFNAGITIHARVLYGKNNHHMIEAVFKALGRALREAVDRDERINGVMSTKGTL.

It belongs to the imidazoleglycerol-phosphate dehydratase family.

The protein localises to the cytoplasm. It catalyses the reaction D-erythro-1-(imidazol-4-yl)glycerol 3-phosphate = 3-(imidazol-4-yl)-2-oxopropyl phosphate + H2O. It functions in the pathway amino-acid biosynthesis; L-histidine biosynthesis; L-histidine from 5-phospho-alpha-D-ribose 1-diphosphate: step 6/9. The sequence is that of Imidazoleglycerol-phosphate dehydratase from Clostridium botulinum (strain Okra / Type B1).